We begin with the raw amino-acid sequence, 217 residues long: Superoxide dismutase [Mn], mitochondrial (217 aa).

A mitochondrion-targeting transit peptide spans 1 to 17; sequence MFVARKISPNCKPGVRG. The Mn(2+) site is built by H43, H91, D175, and H179.

This sequence belongs to the iron/manganese superoxide dismutase family. In terms of assembly, homotetramer. Mn(2+) is required as a cofactor.

It localises to the mitochondrion matrix. The enzyme catalyses 2 superoxide + 2 H(+) = H2O2 + O2. Its function is as follows. Destroys superoxide anion radicals which are normally produced within the cells and which are toxic to biological systems. In Drosophila melanogaster (Fruit fly), this protein is Superoxide dismutase [Mn], mitochondrial (Sod2).